Consider the following 473-residue polypeptide: MSMKISEKKFNDRVGDGIQDSFMRGAVSSAQTRLYTNRLKAADELGNWEEWRELGEQIRQHTLENLDYYLMQLSENVSKRGGHVYFAKTKEEAAKYIQDVAKKKQAKKVVKSKSMVTEEISMNHALEEIGCEVLESDLGEYILQVDNDPPSHIIAPALHKNRTQIRDVFKEKLGYENSDDPYEMTKFVRKQLREKFMDAEIGVTGCNFAVANTGSLCLVTNEGNADLVMSIPKTQIAVMGMERMVPTMEELDVLVGLLCRSAVGQKLTSYVTVAGPIQEEEVDGPEEFHLVVVDNGRSQILGSEFRSVLQCIRCAACVNVCPVYRHVGGHSYGSIYSGPIGAVLTPLLGGYDDYKELPYASSLCGACTEACPVKIPLHDLLLKHRQVIVEQEGRAPLAEKLAMKMFSMGASSAALYKMGSKMAPAAMSPFTSGNRVSKGVGPLKNWTDIREFPAPSKERFRDWYKDHKKGGDK.

2 consecutive 4Fe-4S ferredoxin-type domains span residues glycine 302–tyrosine 332 and tyrosine 351–leucine 380. Cysteine 311, cysteine 314, cysteine 317, cysteine 321, cysteine 364, cysteine 367, and cysteine 371 together coordinate [4Fe-4S] cluster.

This sequence belongs to the LutB/YkgF family.

Functionally, is involved in L-lactate degradation and allows cells to grow with lactate as the sole carbon source. Has probably a role as an electron transporter during oxidation of L-lactate. The chain is Lactate utilization protein B from Bacillus cereus (strain G9842).